The chain runs to 468 residues: E3 ubiquitin-protein ligase RGLG2 (468 aa).

Residues methionine 1–lysine 89 form a disordered region. Glycine 2 is lipidated: N-myristoyl glycine. Positions glutamine 12–asparagine 45 are enriched in low complexity. Positions tyrosine 46–leucine 65 are enriched in pro residues. Over residues tyrosine 66–tyrosine 84 the composition is skewed to low complexity. A VWFA domain is found at asparagine 122–leucine 342. The segment at phenylalanine 369–threonine 416 is disordered. The segment at cysteine 425–arginine 458 adopts an RING-type zinc-finger fold.

In terms of assembly, interacts with the heterodimer UBC35/UEV1B, UBC35 alone, PIN1, but not with UCB2, UCB9, UEV1B or UEV1C alone. Interacts with ERF053. N-myristoylated. Ubiquitously expressed.

It localises to the cell membrane. Its subcellular location is the nucleus. The enzyme catalyses S-ubiquitinyl-[E2 ubiquitin-conjugating enzyme]-L-cysteine + [acceptor protein]-L-lysine = [E2 ubiquitin-conjugating enzyme]-L-cysteine + N(6)-ubiquitinyl-[acceptor protein]-L-lysine.. In terms of biological role, E3 ubiquitin-protein ligase that mediates the formation of 'Lys-63'-linked ubiquitin chains. Regulates apical dominance by acting on the auxin transport proteins abundance. Mediates ubiquitination and subsequent proteasomal degradation of ERF053 in response to drought stress. Acts as a negative regulator of drought stress response. The sequence is that of E3 ubiquitin-protein ligase RGLG2 from Arabidopsis thaliana (Mouse-ear cress).